The sequence spans 73 residues: U3-agatoxin-Ao1e (73 aa).

Residues 1-20 (MRTIISLLLLSAMVFAVIEA) form the signal peptide. Residues 21–34 (ISLEEGLQLFEGER) constitute a propeptide that is removed on maturation. Disulfide bonds link Cys-36-Cys-52, Cys-43-Cys-57, Cys-51-Cys-67, and Cys-59-Cys-65. Asn-71 is modified (asparagine amide).

This sequence belongs to the neurotoxin 07 (Beta/delta-agtx) family. 03 (aga-4) subfamily. Aga sub-subfamily. Expressed by the venom gland.

Its subcellular location is the secreted. Its function is as follows. Insecticidal neurotoxin that induces an irreversible spastic paralysis when injected into insects. Modifies presynaptic voltage-gated sodium channels (Nav), causing them to open at the normal resting potential of the nerve. This leads to spontaneous release of neurotransmitter and repetitive action potentials in motor neurons. In Agelena orientalis (Funnel-web spider), this protein is U3-agatoxin-Ao1e.